Consider the following 267-residue polypeptide: N-formylglutamate deformylase (267 aa).

Belongs to the N-formylglutamate deformylase family. As to quaternary structure, monomer.

It carries out the reaction N-formyl-L-glutamate + H2O = formate + L-glutamate. Its pathway is amino-acid degradation; L-histidine degradation into L-glutamate; L-glutamate from N-formimidoyl-L-glutamate (deiminase route): step 2/2. Stimulated by Co(2+). Fe(2+) is also a good activator, particularly at lower concentrations, but it inhibits slightly the activity when used at concentrations over 0.1 mM. Other divalent metals tested (Cd(2+), Ca(2+), Mn(2+), Zn(2+), Ni(2+) and Mg(2+)) are not effective activators. Catalyzes the hydrolysis of N-formyl-L-glutamate to formate and L-glutamate. The chain is N-formylglutamate deformylase from Pseudomonas putida (Arthrobacter siderocapsulatus).